The chain runs to 192 residues: Thymidine kinase (192 aa).

ATP-binding positions include 9–16 and 87–90; these read ASMNAGKS and DEAQ. The Proton acceptor role is filled by glutamate 88. Zn(2+)-binding residues include cysteine 145, cysteine 147, cysteine 182, and histidine 185.

Belongs to the thymidine kinase family. Homotetramer.

Its subcellular location is the cytoplasm. It catalyses the reaction thymidine + ATP = dTMP + ADP + H(+). The protein is Thymidine kinase of Novosphingobium aromaticivorans (strain ATCC 700278 / DSM 12444 / CCUG 56034 / CIP 105152 / NBRC 16084 / F199).